The primary structure comprises 317 residues: Apolipoprotein E (317 aa).

Residues 1–18 form the signal peptide; the sequence is MKVLWAALLVTFLAGCQA. A run of 8 repeats spans residues 80 to 101, 102 to 123, 124 to 145, 146 to 167, 168 to 189, 190 to 211, 212 to 233, and 234 to 255. Residues 80 to 255 form an 8 X 22 AA approximate tandem repeats region; sequence ALMDETMKEL…RLDEVKEQVA (176 aa). Position 143 is a methionine sulfoxide (M143). S147 is modified (phosphoserine). Residues 158–168 form an LDL and other lipoprotein receptors binding region; that stretch reads HLRKLRKRLLR. 162-165 is a binding site for heparin; that stretch reads LRKR. A lipid-binding and lipoprotein association region spans residues 210–290; that stretch reads AATVGSLAGQ…SWFEPLVEDM (81 aa). 229–236 provides a ligand contact to heparin; that stretch reads GERLRARM. The segment at 266–317 is homooligomerization; sequence QQIRLQAEAFQARLKSWFEPLVEDMQRQWAGLVEKVQAAVGTSAAPVPSDNH. A specificity for association with VLDL region spans residues 278-290; that stretch reads RLKSWFEPLVEDM.

It belongs to the apolipoprotein A1/A4/E family. In terms of assembly, homotetramer. May interact with ABCA1; functionally associated with ABCA1 in the biogenesis of HDLs. May interact with APP/A4 amyloid-beta peptide; the interaction is extremely stable in vitro but its physiological significance is unclear. May interact with MAPT. May interact with MAP2. In the cerebrospinal fluid, interacts with secreted SORL1. Interacts with PMEL; this allows the loading of PMEL luminal fragment on ILVs to induce fibril nucleation. Post-translationally, APOE exists as multiple glycosylated and sialylated glycoforms within cells and in plasma. The extent of glycosylation and sialylation are tissue and context specific. In terms of processing, glycated in plasma VLDL. Phosphorylated by FAM20C in the extracellular medium.

It is found in the secreted. The protein resides in the extracellular space. It localises to the extracellular matrix. Its subcellular location is the extracellular vesicle. The protein localises to the endosome. It is found in the multivesicular body. Its function is as follows. APOE is an apolipoprotein, a protein associating with lipid particles, that mainly functions in lipoprotein-mediated lipid transport between organs via the plasma and interstitial fluids. APOE is a core component of plasma lipoproteins and is involved in their production, conversion and clearance. Apolipoproteins are amphipathic molecules that interact both with lipids of the lipoprotein particle core and the aqueous environment of the plasma. As such, APOE associates with chylomicrons, chylomicron remnants, very low density lipoproteins (VLDL) and intermediate density lipoproteins (IDL) but shows a preferential binding to high-density lipoproteins (HDL). It also binds a wide range of cellular receptors including the LDL receptor/LDLR, the LDL receptor-related proteins LRP1, LRP2 and LRP8 and the very low-density lipoprotein receptor/VLDLR that mediate the cellular uptake of the APOE-containing lipoprotein particles. Finally, APOE also has a heparin-binding activity and binds heparan-sulfate proteoglycans on the surface of cells, a property that supports the capture and the receptor-mediated uptake of APOE-containing lipoproteins by cells. A main function of APOE is to mediate lipoprotein clearance through the uptake of chylomicrons, VLDLs, and HDLs by hepatocytes. APOE is also involved in the biosynthesis by the liver of VLDLs as well as their uptake by peripheral tissues ensuring the delivery of triglycerides and energy storage in muscle, heart and adipose tissues. By participating in the lipoprotein-mediated distribution of lipids among tissues, APOE plays a critical role in plasma and tissues lipid homeostasis. APOE is also involved in two steps of reverse cholesterol transport, the HDLs-mediated transport of cholesterol from peripheral tissues to the liver, and thereby plays an important role in cholesterol homeostasis. First, it is functionally associated with ABCA1 in the biogenesis of HDLs in tissues. Second, it is enriched in circulating HDLs and mediates their uptake by hepatocytes. APOE also plays an important role in lipid transport in the central nervous system, regulating neuron survival and sprouting. The protein is Apolipoprotein E (APOE) of Hylobates lar (Lar gibbon).